We begin with the raw amino-acid sequence, 203 residues long: Probable host range protein 2-3 (203 aa).

The interval 182-203 (LEEEDEEKIADTGNDNQKDAED) is disordered.

The protein belongs to the poxviridae C7 protein family.

Functionally, plays a role for multiplication of the virus in different cell types. This chain is Probable host range protein 2-3, found in Myxoma virus (strain Lausanne) (MYXV).